Consider the following 461-residue polypeptide: Bifunctional protein HldE (461 aa).

The segment at 1–315 (MKKILVIGDL…LILNQTHPKI (315 aa)) is ribokinase. 191-194 (NRTE) lines the ATP pocket. Residue aspartate 260 is part of the active site. The interval 332–461 (FTNGCFDLLH…IEKIKRTCND (130 aa)) is cytidylyltransferase.

This sequence in the N-terminal section; belongs to the carbohydrate kinase PfkB family. In the C-terminal section; belongs to the cytidylyltransferase family. In terms of assembly, homodimer.

The catalysed reaction is D-glycero-beta-D-manno-heptose 7-phosphate + ATP = D-glycero-beta-D-manno-heptose 1,7-bisphosphate + ADP + H(+). It catalyses the reaction D-glycero-beta-D-manno-heptose 1-phosphate + ATP + H(+) = ADP-D-glycero-beta-D-manno-heptose + diphosphate. It participates in nucleotide-sugar biosynthesis; ADP-L-glycero-beta-D-manno-heptose biosynthesis; ADP-L-glycero-beta-D-manno-heptose from D-glycero-beta-D-manno-heptose 7-phosphate: step 1/4. It functions in the pathway nucleotide-sugar biosynthesis; ADP-L-glycero-beta-D-manno-heptose biosynthesis; ADP-L-glycero-beta-D-manno-heptose from D-glycero-beta-D-manno-heptose 7-phosphate: step 3/4. The protein operates within bacterial outer membrane biogenesis; LPS core biosynthesis. Functionally, catalyzes the phosphorylation of D-glycero-D-manno-heptose 7-phosphate at the C-1 position to selectively form D-glycero-beta-D-manno-heptose-1,7-bisphosphate. In terms of biological role, catalyzes the ADP transfer from ATP to D-glycero-beta-D-manno-heptose 1-phosphate, yielding ADP-D-glycero-beta-D-manno-heptose. This is Bifunctional protein HldE from Helicobacter pylori (strain ATCC 700392 / 26695) (Campylobacter pylori).